The sequence spans 186 residues: ATP synthase subunit delta (186 aa).

This sequence belongs to the ATPase delta chain family. F-type ATPases have 2 components, F(1) - the catalytic core - and F(0) - the membrane proton channel. F(1) has five subunits: alpha(3), beta(3), gamma(1), delta(1), epsilon(1). F(0) has three main subunits: a(1), b(2) and c(10-14). The alpha and beta chains form an alternating ring which encloses part of the gamma chain. F(1) is attached to F(0) by a central stalk formed by the gamma and epsilon chains, while a peripheral stalk is formed by the delta and b chains.

It localises to the cell inner membrane. Functionally, f(1)F(0) ATP synthase produces ATP from ADP in the presence of a proton or sodium gradient. F-type ATPases consist of two structural domains, F(1) containing the extramembraneous catalytic core and F(0) containing the membrane proton channel, linked together by a central stalk and a peripheral stalk. During catalysis, ATP synthesis in the catalytic domain of F(1) is coupled via a rotary mechanism of the central stalk subunits to proton translocation. Its function is as follows. This protein is part of the stalk that links CF(0) to CF(1). It either transmits conformational changes from CF(0) to CF(1) or is implicated in proton conduction. This is ATP synthase subunit delta from Bacteroides fragilis (strain ATCC 25285 / DSM 2151 / CCUG 4856 / JCM 11019 / LMG 10263 / NCTC 9343 / Onslow / VPI 2553 / EN-2).